A 393-amino-acid polypeptide reads, in one-letter code: Nucleoside permease NupC (393 aa).

A run of 9 helical transmembrane segments spans residues 3 to 23 (YLIGIIGLIVFLGLAWIASSG), 32 to 52 (IVVMLILQFILGYILLNTGIG), 87 to 107 (TTFFMNVLLPIVFISALIGIL), 168 to 188 (LCASAMSTVSMSIVGAYMTML), 191 to 211 (EYVVTALVLNLFGGFIIASII), 249 to 269 (VVVAAMLIGFVAIIALINGIF), 272 to 292 (VFGISFQGILGYVFAPFAFLV), 334 to 354 (AIVSVFLVSFANFSSIGIIAG), and 372 to 392 (LKLLYGATLVSFLSAAIVGLI).

It belongs to the concentrative nucleoside transporter (CNT) (TC 2.A.41) family.

Its subcellular location is the cell membrane. Its function is as follows. Transport of the pyrimidine nucleoside uridine. The protein is Nucleoside permease NupC of Bacillus subtilis (strain 168).